The sequence spans 449 residues: UDP-N-acetylmuramate--L-alanine ligase (449 aa).

Position 121 to 127 (121 to 127 (GAHGKSS)) interacts with ATP.

Belongs to the MurCDEF family.

The protein localises to the cytoplasm. It catalyses the reaction UDP-N-acetyl-alpha-D-muramate + L-alanine + ATP = UDP-N-acetyl-alpha-D-muramoyl-L-alanine + ADP + phosphate + H(+). It participates in cell wall biogenesis; peptidoglycan biosynthesis. Its function is as follows. Cell wall formation. The protein is UDP-N-acetylmuramate--L-alanine ligase of Helicobacter pylori (strain ATCC 700392 / 26695) (Campylobacter pylori).